Consider the following 340-residue polypeptide: Heat-inducible transcription repressor HrcA (340 aa).

Belongs to the HrcA family.

Its function is as follows. Negative regulator of class I heat shock genes (grpE-dnaK-dnaJ and groELS operons). Prevents heat-shock induction of these operons. In Chromobacterium violaceum (strain ATCC 12472 / DSM 30191 / JCM 1249 / CCUG 213 / NBRC 12614 / NCIMB 9131 / NCTC 9757 / MK), this protein is Heat-inducible transcription repressor HrcA.